The primary structure comprises 327 residues: 4-hydroxythreonine-4-phosphate dehydrogenase (327 aa).

Residues histidine 134 and threonine 135 each contribute to the substrate site. Positions 164, 209, and 264 each coordinate a divalent metal cation. Substrate contacts are provided by lysine 272, asparagine 281, and arginine 290.

The protein belongs to the PdxA family. In terms of assembly, homodimer. Zn(2+) is required as a cofactor. The cofactor is Mg(2+). Co(2+) serves as cofactor.

It is found in the cytoplasm. The catalysed reaction is 4-(phosphooxy)-L-threonine + NAD(+) = 3-amino-2-oxopropyl phosphate + CO2 + NADH. It functions in the pathway cofactor biosynthesis; pyridoxine 5'-phosphate biosynthesis; pyridoxine 5'-phosphate from D-erythrose 4-phosphate: step 4/5. In terms of biological role, catalyzes the NAD(P)-dependent oxidation of 4-(phosphooxy)-L-threonine (HTP) into 2-amino-3-oxo-4-(phosphooxy)butyric acid which spontaneously decarboxylates to form 3-amino-2-oxopropyl phosphate (AHAP). This Shewanella frigidimarina (strain NCIMB 400) protein is 4-hydroxythreonine-4-phosphate dehydrogenase.